The sequence spans 158 residues: 6,7-dimethyl-8-ribityllumazine synthase (158 aa).

Residues Phe-22, 57–59, and 81–83 contribute to the 5-amino-6-(D-ribitylamino)uracil site; these read AVE and AVI. 86-87 provides a ligand contact to (2S)-2-hydroxy-3-oxobutyl phosphate; it reads GT. The active-site Proton donor is His-89. Phe-114 contributes to the 5-amino-6-(D-ribitylamino)uracil binding site. Arg-128 contributes to the (2S)-2-hydroxy-3-oxobutyl phosphate binding site.

Belongs to the DMRL synthase family. In terms of assembly, forms an icosahedral capsid composed of 60 subunits, arranged as a dodecamer of pentamers.

The catalysed reaction is (2S)-2-hydroxy-3-oxobutyl phosphate + 5-amino-6-(D-ribitylamino)uracil = 6,7-dimethyl-8-(1-D-ribityl)lumazine + phosphate + 2 H2O + H(+). Its pathway is cofactor biosynthesis; riboflavin biosynthesis; riboflavin from 2-hydroxy-3-oxobutyl phosphate and 5-amino-6-(D-ribitylamino)uracil: step 1/2. In terms of biological role, catalyzes the formation of 6,7-dimethyl-8-ribityllumazine by condensation of 5-amino-6-(D-ribitylamino)uracil with 3,4-dihydroxy-2-butanone 4-phosphate. This is the penultimate step in the biosynthesis of riboflavin. The chain is 6,7-dimethyl-8-ribityllumazine synthase from Shewanella halifaxensis (strain HAW-EB4).